Reading from the N-terminus, the 113-residue chain is Ig kappa chain V-II region 26-10 (113 aa).

The interval 1–23 (DVVMTQTPLSLPVSLGDQASISC) is framework-1. The cysteines at positions 23 and 93 are disulfide-linked. The interval 24 to 39 (RSSQSLVHSNGNTYLN) is complementarity-determining-1. The framework-2 stretch occupies residues 40–54 (WYLQKAGQSPKLLIY). A complementarity-determining-2 region spans residues 55 to 61 (KVSNRFS). The framework-3 stretch occupies residues 62 to 93 (GVPDRFSGSGSGTDFTLKISRVEAEDLGIYFC). The complementarity-determining-3 stretch occupies residues 94–102 (SQTTHVPPT). The interval 103-112 (FGGGTKLEIK) is framework-4.

In Mus musculus (Mouse), this protein is Ig kappa chain V-II region 26-10.